Here is a 379-residue protein sequence, read N- to C-terminus: Succinyl-diaminopimelate desuccinylase (379 aa).

His68 contacts Zn(2+). Asp70 is an active-site residue. Asp101 lines the Zn(2+) pocket. Glu135 (proton acceptor) is an active-site residue. The Zn(2+) site is built by Glu136, Glu164, and His350.

The protein belongs to the peptidase M20A family. DapE subfamily. Homodimer. The cofactor is Zn(2+). Requires Co(2+) as cofactor.

It carries out the reaction N-succinyl-(2S,6S)-2,6-diaminopimelate + H2O = (2S,6S)-2,6-diaminopimelate + succinate. It functions in the pathway amino-acid biosynthesis; L-lysine biosynthesis via DAP pathway; LL-2,6-diaminopimelate from (S)-tetrahydrodipicolinate (succinylase route): step 3/3. Functionally, catalyzes the hydrolysis of N-succinyl-L,L-diaminopimelic acid (SDAP), forming succinate and LL-2,6-diaminopimelate (DAP), an intermediate involved in the bacterial biosynthesis of lysine and meso-diaminopimelic acid, an essential component of bacterial cell walls. The chain is Succinyl-diaminopimelate desuccinylase from Bordetella pertussis (strain Tohama I / ATCC BAA-589 / NCTC 13251).